We begin with the raw amino-acid sequence, 2035 residues long: Host cell factor 1 (2035 aa).

An N-acetylalanine modification is found at Ala-2. Ser-6 is subject to Phosphoserine. 5 Kelch repeats span residues Leu-44–Cys-89, Arg-93–His-140, Lys-148–Gly-194, Lys-217–Asn-265, and Lys-266–Thr-313. Glycyl lysine isopeptide (Lys-Gly) (interchain with G-Cter in ubiquitin) cross-links involve residues Lys-105, Lys-163, and Lys-244. A Glycyl lysine isopeptide (Lys-Gly) (interchain with G-Cter in SUMO2) cross-link involves residue Lys-282. Lys-288 carries the N6-acetyllysine modification. A Glycyl lysine isopeptide (Lys-Gly) (interchain with G-Cter in ubiquitin) cross-link involves residue Lys-363. In terms of domain architecture, Fibronectin type-III 1 spans Pro-366–Thr-466. Residues Ala-407 to Ala-434 form a disordered region. Residue Ser-411 is modified to Phosphoserine. The segment covering Thr-413–Pro-428 has biased composition (pro residues). The segment at Leu-500–Ala-550 is required for interaction with OGT. An omega-N-methylarginine mark is found at Arg-504 and Arg-524. 3 positions are modified to phosphoserine: Ser-598, Ser-666, and Ser-669. The tract at residues Leu-610 to Leu-722 is interaction with SIN3A. The segment at Ile-750–Thr-902 is interaction with ZBTB17. The residue at position 813 (Lys-813) is an N6-acetyllysine. The interaction with GABP2 stretch occupies residues Lys-813–Thr-912. HCF repeat repeat units follow at residues Thr-1010–Ala-1035, Val-1072–Asn-1097, and Gln-1101–Ser-1126. The stretch at Ala-1158–Thr-1183 is one HCF repeat 4; degenerate repeat. Ser-1205 is modified (phosphoserine). An Omega-N-methylarginine modification is found at Arg-1219. Position 1224 is a phosphoserine (Ser-1224). HCF repeat repeat units lie at residues Thr-1286–Gly-1311 and Gln-1314–Asn-1339. 3 disordered regions span residues Pro-1292 to Val-1371, Thr-1435 to Ser-1470, and Val-1487 to Pro-1515. Low complexity-rich tracts occupy residues Thr-1299–Ser-1312, Thr-1329–Asn-1339, and Thr-1362–Val-1371. The HCF repeat 7; degenerate repeat unit spans residues Gln-1349–Gly-1374. The stretch at Gln-1414–Asn-1439 is one HCF repeat 8 repeat. Thr-1491 is modified (phosphothreonine). A compositionally biased stretch (pro residues) spans Val-1493–Glu-1502. Ser-1497, Ser-1507, and Ser-1771 each carry phosphoserine. 2 Fibronectin type-III domains span residues Leu-1797–Pro-1888 and Phe-1890–Asp-2006. Residues Lys-1807 and Lys-1808 each participate in a glycyl lysine isopeptide (Lys-Gly) (interchain with G-Cter in ubiquitin) cross-link. Ser-1838 bears the Phosphoserine mark. The disordered stretch occupies residues Ala-1994–Gln-2035. Lys-2005 carries the N6-acetyllysine modification. A Glycyl lysine isopeptide (Lys-Gly) (interchain with G-Cter in SUMO2) cross-link involves residue Lys-2024.

Composed predominantly of six polypeptides ranging from 110 to 150 kDa and a minor 300 kDa polypeptide. The majority of N- and C-terminal cleavage products remain tightly, albeit non-covalently, associated. Interacts with POU2F1, CREB3, ZBTB17, EGR2, E2F4, CREBZF, SP1, GABP2, Sin3 HDAC complex (SIN3A, HDAC1, HDAC2, SUDS3), SAP30, SIN3B and FHL2. Component of a MLL1 complex, composed of at least the core components KMT2A/MLL1, ASH2L, HCFC1, WDR5 and RBBP5, as well as the facultative components BACC1, CHD8, DPY30, E2F6, HCFC2, HSP70, INO80C, KANSL1, LAS1L, MAX, MCRS1, MEN1, MGA, KAT8, PELP1, PHF20, PRP31, RING2, RUVBL1, RUVBL2, SENP3, TAF1, TAF4, TAF6, TAF7, TAF9 and TEX10. Component of a THAP1/THAP3-HCFC1-OGT complex that is required for the regulation of the transcriptional activity of RRM1. Interacts directly with THAP3 (via its HBM). Interacts (via the Kelch-repeat domain) with THAP1 (via the HBM); the interaction recruits HCHC1 to the RRM1. Interacts with THAP7 and THAP11 (via the HMB). Interacts directly with OGT; the interaction, which requires the HCFC1 cleavage site domain, glycosylates and promotes the proteolytic processing of HCFC1, retains OGT in the nucleus and impacts the expression of herpes simplex virus immediate early viral genes. Component of the SET1 complex, at least composed of the catalytic subunit (SETD1A or SETD1B), WDR5, WDR82, RBBP5, ASH2L, CXXC1, HCFC1 and DPY30. Component of the NSL complex at least composed of MOF/KAT8, KANSL1, KANSL2, KANSL3, MCRS1, PHF20, OGT1/OGT, WDR5 and HCFC1. Component of a complex at least composed of ZNF335, HCFC1, CCAR2, EMSY, MKI67, RBBP5, ASH2L and WDR5; the complex is formed as a result of interactions between components of a nuclear receptor-mediated transcription complex and a histone methylation complex. Within the complex interacts with ZNF335. Interacts with TET2 and TET3. Interacts with HCFC1R1. Interacts with THAP11. Interacts (via Kelch domain) with KMT2E/MLL5 isoform 3 (via HBM motif). Interacts with E2F1. Accessory scaffold component of the polycomb repressive deubiquitinase (PR-DUB) complex, at least composed of BAP1, one of ASXL1, ASXL2 or (probably) ASXL3 and one of MBD5 or MBD6; the PR-DUB core associates with a number of accessory proteins, including FOXK1, FOXK2, KDM1B, HCFC1, YY1 and OGT. Interacts with YY1 (via Gly-rich region); the interaction is direct. Interacts with BAP1 (via HBM-like motif). As to quaternary structure, (Microbial infection) Associates with the VP16-induced complex; binding to HCFC1 activates the viral transcriptional activator VP16 for association with POU2F1, to form a multiprotein-DNA complex responsible for activating transcription of the viral immediate early genes. Interacts with the viral transactivator protein VP16. Proteolytically cleaved at one or several PPCE--THET sites within the HCF repeats. Further cleavage of the primary N- and C-terminal chains results in a 'trimming' and accumulation of the smaller chains. Cleavage is promoted by O-glycosylation. Post-translationally, O-glycosylated. GlcNAcylation by OGT promotes proteolytic processing. In terms of processing, ubiquitinated. Lys-1807 and Lys-1808 are ubiquitinated both via 'Lys-48'- and 'Lys-63'-linked polyubiquitin chains. BAP1 mediated deubiquitination of 'Lys-48'-linked polyubiquitin chains; deubiquitination by BAP1 does not seem to stabilize the protein. As to expression, highly expressed in fetal tissues and the adult kidney. Present in all tissues tested.

Its subcellular location is the cytoplasm. It is found in the nucleus. In terms of biological role, transcriptional coregulator. Serves as a scaffold protein, bridging interactions between transcription factors, including THAP11 and ZNF143, and transcriptional coregulators. Involved in control of the cell cycle. Also antagonizes transactivation by ZBTB17 and GABP2; represses ZBTB17 activation of the p15(INK4b) promoter and inhibits its ability to recruit p300. Coactivator for EGR2 and GABP2. Tethers the chromatin modifying Set1/Ash2 histone H3 'Lys-4' methyltransferase (H3K4me) and Sin3 histone deacetylase (HDAC) complexes (involved in the activation and repression of transcription, respectively) together. Component of a THAP1/THAP3-HCFC1-OGT complex that is required for the regulation of the transcriptional activity of RRM1. As part of the NSL complex it may be involved in acetylation of nucleosomal histone H4 on several lysine residues. Recruits KMT2E/MLL5 to E2F1 responsive promoters promoting transcriptional activation and thereby facilitates G1 to S phase transition. Modulates expression of homeobox protein PDX1, perhaps acting in concert with transcription factor E2F1, thereby regulating pancreatic beta-cell growth and glucose-stimulated insulin secretion. May negatively modulate transcriptional activity of FOXO3. Its function is as follows. (Microbial infection) In case of human herpes simplex virus (HSV) infection, HCFC1 forms a multiprotein-DNA complex with the viral transactivator protein VP16 and POU2F1 thereby enabling the transcription of the viral immediate early genes. This is Host cell factor 1 from Homo sapiens (Human).